The following is a 600-amino-acid chain: Potassium-transporting ATPase potassium-binding subunit (600 aa).

Helical transmembrane passes span 6–26, 65–85, 136–156, 179–199, 283–303, 314–334, 367–387, 419–439, 458–478, 523–543, and 566–586; these read IILL…LGTY, GYAI…YAVQ, ALSG…YALI, LYVL…QGVI, FSNL…CFTF, WAIL…VMGA, FGIS…CGAV, GLYG…LMIG, SLVI…AVVL, VMLA…VLAI, and LFIA…YVPA.

The protein belongs to the KdpA family. In terms of assembly, the system is composed of three essential subunits: KdpA, KdpB and KdpC.

The protein localises to the cell inner membrane. Its function is as follows. Part of the high-affinity ATP-driven potassium transport (or Kdp) system, which catalyzes the hydrolysis of ATP coupled with the electrogenic transport of potassium into the cytoplasm. This subunit binds the periplasmic potassium ions and delivers the ions to the membrane domain of KdpB through an intramembrane tunnel. This Janthinobacterium sp. (strain Marseille) (Minibacterium massiliensis) protein is Potassium-transporting ATPase potassium-binding subunit.